The primary structure comprises 441 residues: Collagen alpha-1(XXVI) chain (441 aa).

The first 20 residues, 1–20, serve as a signal peptide directing secretion; that stretch reads MKLALLLPWACCCLCGSALA. One can recognise an EMI domain in the interval 52-128; it reads RRHWCHHTVT…PGFTGSNCDE (77 aa). Intrachain disulfides connect C56–C118, C83–C89, and C117–C126. An N-linked (GlcNAc...) asparagine glycan is attached at N70. N132 is a glycosylation site (N-linked (GlcNAc...) asparagine). Disordered regions lie at residues 156–362 and 390–441; these read AERP…AEGE and PLAS…SSRK. 2 consecutive Collagen-like domains span residues 199 to 267 and 302 to 355; these read GPAG…PGPS and GVPG…EGEK. Composition is skewed to pro residues over residues 200-215, 231-243, 252-269, and 306-327; these read PAGPPGQTGPPGPAGP, AGPPGLLGPPGPR, PGPPGPPGPAGNPGPSPN, and PRGPPGPPGPPGPRGPPGPPGT. Residues 348–357 are compositionally biased toward basic and acidic residues; that stretch reads VKGEEGEKAA.

In terms of assembly, homotrimer or heterotrimer. Hydroxylated on proline residues.

Its subcellular location is the secreted. The protein resides in the extracellular space. The protein localises to the extracellular matrix. In Homo sapiens (Human), this protein is Collagen alpha-1(XXVI) chain (COL26A1).